Consider the following 400-residue polypeptide: Large envelope protein (400 aa).

Met-1 carries the N-acetylmethionine modification. Disordered stretches follow at residues 1–50 (MGGW…PHKD) and 84–116 (ILTS…RDTH). Residue Gly-2 is the site of N-myristoyl glycine; by host attachment. Residues 2-119 (GGWSSKPRKG…PPLRDTHPQA (118 aa)) are pre-S1. The interval 2–174 (GGWSSKPRKG…LSTTGDPVPN (173 aa)) is pre-S. The Virion surface; in external conformation portion of the chain corresponds to 2–181 (GGWSSKPRKG…VPNMENIASG (180 aa)). Over 2 to 253 (GGWSSKPRKG…PGYRWMYLRR (252 aa)) the chain is Intravirion; in internal conformation. The N-linked (GlcNAc...) asparagine glycan is linked to Trp-4. The segment covering 96–106 (STNRQSGRQPT) has biased composition (polar residues). The interval 120 to 174 (MQWNSTTFHQTLQDPRVRALYLPAGGSSSGTVSPAQNTVSAISSILSTTGDPVPN) is pre-S2. Residues 182 to 202 (LLGPLLVLQAGFFSLTKILTI) form a helical membrane-spanning segment. Residues 203-253 (PQSLDSWWTSLSFLGGTPVCLGQNSQSPISSHSPTCCPPICPGYRWMYLRR) lie on the Intravirion; in external conformation side of the membrane. The chain crosses the membrane as a helical span at residues 254 to 274 (FIIXLCILLLCLIFLLVLLDY). The Virion surface portion of the chain corresponds to 275-348 (QGMLPVCPLI…WASVRFSWLS (74 aa)). The N-linked (GlcNAc...) asparagine; by host glycan is linked to Asn-320. A helical transmembrane segment spans residues 349–369 (LLVPFVQWFVGLSPTVWLSVI). Over 370–375 (WMMWYW) the chain is Intravirion. A helical membrane pass occupies residues 376 to 398 (GPSLYNILSPFMPLLPIFFCLWV). Residues 399-400 (YI) are Virion surface-facing.

This sequence belongs to the orthohepadnavirus major surface antigen family. Interacts (via its myristoylated pre-S1 region) with the host SLC10A1/NTCP; this interaction is essential for viral entry. In terms of assembly, in its internal form (Li-HBsAg), interacts with the capsid protein and with the isoform S. Interacts with host chaperone CANX. As to quaternary structure, associates with host chaperone CANX through its pre-S2 N glycan; this association may be essential for isoform M proper secretion. Interacts with isoform L. Interacts with the antigens of satellite virus HDV (HDVAgs); this interaction is required for encapsidation of HDV genomic RNA. In terms of processing, isoform M is N-terminally acetylated by host at a ratio of 90%, and N-glycosylated by host at the pre-S2 region. Myristoylated; this modification is essential for its interaction with the host protein SLC10A1/NTCP.

The protein resides in the virion membrane. Its function is as follows. The large envelope protein exists in two topological conformations, one which is termed 'external' or Le-HBsAg and the other 'internal' or Li-HBsAg. In its external conformation the protein attaches the virus to cell receptors and thereby initiating infection. This interaction determines the species specificity and liver tropism. This attachment induces virion internalization predominantly through caveolin-mediated endocytosis. The large envelope protein also assures fusion between virion membrane and endosomal membrane. In its internal conformation the protein plays a role in virion morphogenesis and mediates the contact with the nucleocapsid like a matrix protein. Functionally, the middle envelope protein plays an important role in the budding of the virion. It is involved in the induction of budding in a nucleocapsid independent way. In this process the majority of envelope proteins bud to form subviral lipoprotein particles of 22 nm of diameter that do not contain a nucleocapsid. In Hepatitis B virus genotype B1 (isolate Japan/Ry30/2002) (HBV-B), this protein is Large envelope protein.